A 168-amino-acid chain; its full sequence is Secreted RxLR effector protein RXLR-C06 (168 aa).

Positions 1 to 22 are cleaved as a signal peptide; that stretch reads MRIQLLWLSFAVLSTILSTCDA. The segment at 25–52 is disordered; that stretch reads DKLDPQRVQPNQNGSGHNQSIRSALKTS. Over residues 32-50 the composition is skewed to polar residues; sequence VQPNQNGSGHNQSIRSALK. N-linked (GlcNAc...) asparagine glycans are attached at residues N37 and N42. Positions 46-63 match the RxLR-dEER motif; the sequence is RSALKTSHGKTIADDEER. In terms of domain architecture, IQ spans 78–107; it reads YKAIVAKLSKYFRDYHERREIRKQRILNKS. A glycan (N-linked (GlcNAc...) asparagine) is linked at N105.

This sequence belongs to the RxLR effector family.

It is found in the secreted. The protein localises to the host Golgi apparatus. In terms of biological role, secreted effector that suppresses pattern-triggered immunity (PTI) in plant host. The polypeptide is Secreted RxLR effector protein RXLR-C06 (Plasmopara halstedii (Downy mildew of sunflower)).